Here is a 61-residue protein sequence, read N- to C-terminus: Large ribosomal subunit protein uL30 (61 aa).

It belongs to the universal ribosomal protein uL30 family. Part of the 50S ribosomal subunit.

The polypeptide is Large ribosomal subunit protein uL30 (Chlorobium phaeobacteroides (strain DSM 266 / SMG 266 / 2430)).